Reading from the N-terminus, the 309-residue chain is Mas-related G-protein coupled receptor member E (309 aa).

At 1–21 (MSLRVHTHSPSTQGDMAFNLT) the chain is on the extracellular side. N19 carries N-linked (GlcNAc...) asparagine glycosylation. The chain crosses the membrane as a helical span at residues 22–42 (ILSLTELLSLGGLLGNGVALW). The Cytoplasmic portion of the chain corresponds to 43–59 (LLNQNVYRNPFSIYLLD). Residues 60–80 (VACADLIFLCCHMVAIIPELL) form a helical membrane-spanning segment. Topologically, residues 81–91 (QDQLNFPEFVH) are extracellular. The chain crosses the membrane as a helical span at residues 92–112 (ISLIMLRFFCYIVGLSLLVAI). At 113–132 (STEQCLATLFPSGYLCRRPR) the chain is on the cytoplasmic side. Residues 133–153 (YLTTCVCAFIWVLCLLLDLLL) form a helical membrane-spanning segment. Residues 154-168 (SGACTQFFGAPSYHL) lie on the Extracellular side of the membrane. The helical transmembrane segment at 169-189 (CGMLWLVVAVLLAALCCTMCV) threads the bilayer. Residues 190 to 212 (TSLLLLLRVERGPERHQPRGFPT) are Cytoplasmic-facing. The helical transmembrane segment at 213-233 (LVLLVILLFLFCGLPFGIFWL) threads the bilayer. Topologically, residues 234–247 (SKNLSWHTPLYFYH) are extracellular. N236 is a glycosylation site (N-linked (GlcNAc...) asparagine). A helical transmembrane segment spans residues 248 to 268 (FSFFMASVHSAAKPAIYFFLG). Topologically, residues 269–309 (STPGQRFQEPLRLVLQRALGDEAELGAVREASQGGLVDMTV) are cytoplasmic.

The protein belongs to the G-protein coupled receptor 1 family. Mas subfamily.

The protein resides in the cell membrane. Its function is as follows. Orphan receptor. May regulate nociceptor function and/or development, including the sensation or modulation of pain. The sequence is that of Mas-related G-protein coupled receptor member E (Mrgpre) from Rattus norvegicus (Rat).